The sequence spans 285 residues: Bis(5'-nucleosyl)-tetraphosphatase, symmetrical (285 aa).

This sequence belongs to the Ap4A hydrolase family.

It catalyses the reaction P(1),P(4)-bis(5'-adenosyl) tetraphosphate + H2O = 2 ADP + 2 H(+). Functionally, hydrolyzes diadenosine 5',5'''-P1,P4-tetraphosphate to yield ADP. In Colwellia psychrerythraea (strain 34H / ATCC BAA-681) (Vibrio psychroerythus), this protein is Bis(5'-nucleosyl)-tetraphosphatase, symmetrical.